Reading from the N-terminus, the 147-residue chain is Cytochrome c-type biogenesis protein CcmE 1 (147 aa).

Residues 1–9 (MKSLKKQRR) lie on the Cytoplasmic side of the membrane. A helical; Signal-anchor for type II membrane protein transmembrane segment spans residues 10–30 (IQVIILATVALVLATGLIGYA). At 31–147 (MRDGINFFRA…EQGVYQAPES (117 aa)) the chain is on the periplasmic side. 2 residues coordinate heme: histidine 123 and tyrosine 127.

The protein belongs to the CcmE/CycJ family.

The protein localises to the cell inner membrane. Its function is as follows. Heme chaperone required for the biogenesis of c-type cytochromes. Transiently binds heme delivered by CcmC and transfers the heme to apo-cytochromes in a process facilitated by CcmF and CcmH. The sequence is that of Cytochrome c-type biogenesis protein CcmE 1 from Ruegeria pomeroyi (strain ATCC 700808 / DSM 15171 / DSS-3) (Silicibacter pomeroyi).